The sequence spans 390 residues: NADH-quinone oxidoreductase subunit D (390 aa).

Belongs to the complex I 49 kDa subunit family. In terms of assembly, NDH-1 is composed of 14 different subunits. Subunits NuoB, C, D, E, F, and G constitute the peripheral sector of the complex.

Its subcellular location is the cell membrane. It carries out the reaction a quinone + NADH + 5 H(+)(in) = a quinol + NAD(+) + 4 H(+)(out). Its function is as follows. NDH-1 shuttles electrons from NADH, via FMN and iron-sulfur (Fe-S) centers, to quinones in the respiratory chain. The immediate electron acceptor for the enzyme in this species is believed to be ubiquinone. Couples the redox reaction to proton translocation (for every two electrons transferred, four hydrogen ions are translocated across the cytoplasmic membrane), and thus conserves the redox energy in a proton gradient. The polypeptide is NADH-quinone oxidoreductase subunit D (Wolbachia pipientis subsp. Culex pipiens (strain wPip)).